Reading from the N-terminus, the 176-residue chain is Isopentenyl-diphosphate Delta-isomerase 1 (176 aa).

Mn(2+)-binding residues include His23 and His30. Residues 28–162 (HLHRAFSCFI…EEFCTPWFKK (135 aa)) enclose the Nudix hydrolase domain. Cys65 is an active-site residue. Residue Cys65 participates in Mg(2+) binding. His67 provides a ligand contact to Mn(2+). Glu85 contacts Mg(2+). Residues Glu112 and Glu114 each contribute to the Mn(2+) site. Residue Glu114 is part of the active site.

It belongs to the IPP isomerase type 1 family. Homodimer. Requires Mg(2+) as cofactor. Mn(2+) serves as cofactor.

The protein resides in the cytoplasm. The catalysed reaction is isopentenyl diphosphate = dimethylallyl diphosphate. It functions in the pathway isoprenoid biosynthesis; dimethylallyl diphosphate biosynthesis; dimethylallyl diphosphate from isopentenyl diphosphate: step 1/1. In terms of biological role, catalyzes the 1,3-allylic rearrangement of the homoallylic substrate isopentenyl (IPP) to its highly electrophilic allylic isomer, dimethylallyl diphosphate (DMAPP). The polypeptide is Isopentenyl-diphosphate Delta-isomerase 1 (Photorhabdus laumondii subsp. laumondii (strain DSM 15139 / CIP 105565 / TT01) (Photorhabdus luminescens subsp. laumondii)).